A 353-amino-acid chain; its full sequence is 11-beta-hydroxysteroid dehydrogenase B (353 aa).

A helical; Signal-anchor for type II membrane protein transmembrane segment spans residues 10–30 (LFVPPASLITLAFSWPALCFP). Residues 13–26 (PPASLITLAFSWPA) carry the Proline-knob motif. NADP(+) is bound by residues 54–80 (GASS…VARR) and Asp-105. Ser-184 is a binding site for substrate. The active-site Proton acceptor is Tyr-197. NADP(+) is bound by residues 197–201 (YAAAK) and Lys-201.

It belongs to the short-chain dehydrogenases/reductases (SDR) family. In terms of tissue distribution, expressed in seeds (at protein level).

It is found in the lipid droplet. Its subcellular location is the membrane. The enzyme catalyses an 11beta-hydroxysteroid + NADP(+) = an 11-oxosteroid + NADPH + H(+). Its function is as follows. Has dehydrogenase activity against 11 beta-hydroxysteroid and 17 beta-hydroxysteroid. May be involved in signal transduction regulated by various sterols. The chain is 11-beta-hydroxysteroid dehydrogenase B from Arachis hypogaea (Peanut).